A 378-amino-acid polypeptide reads, in one-letter code: 7-methylxanthine methyltransferase 1 (378 aa).

Residues Tyr18, Cys61, Asn66, Asp100, Leu101, Ser139, Phe140, and Cys156 each contribute to the S-adenosyl-L-homocysteine site. Residues Tyr157, His160, and Trp161 each coordinate theobromine. Positions 178, 260, 262, and 263 each coordinate Mg(2+). Tyr362 is a theobromine binding site.

This sequence belongs to the methyltransferase superfamily. Type-7 methyltransferase family. Mg(2+) is required as a cofactor. As to expression, mainly expressed, at low levels, in leaves and fruits (grains). Also present, at lower levels, in roots, stamens and pistils.

The protein resides in the cytoplasm. It carries out the reaction 7-methylxanthine + S-adenosyl-L-methionine = theobromine + S-adenosyl-L-homocysteine + H(+). It participates in alkaloid biosynthesis. Functionally, involved in the biosynthesis of caffeine. Catalyzes the conversion of 7-methylxanthine (7mX) to theobromine and of paraxanthine to caffeine. The protein is 7-methylxanthine methyltransferase 1 of Coffea canephora (Robusta coffee).